The primary structure comprises 208 residues: CASP-like protein 3A1 (208 aa).

2 stretches are compositionally biased toward polar residues: residues 1–11 (MGSFANGQNGS) and 17–33 (TPATGSNAALEPPTTSA). Residues 1–33 (MGSFANGQNGSELGIQTPATGSNAALEPPTTSA) are disordered. The Cytoplasmic portion of the chain corresponds to 1 to 43 (MGSFANGQNGSELGIQTPATGSNAALEPPTTSAAAPRCPRLGM). Residues 44–64 (AMVAARAAALVMALLSVSLMV) traverse the membrane as a helical segment. The Extracellular portion of the chain corresponds to 65–92 (SAKQRGTLAIFGIEIPLYAKWSLSDSLQ). A helical transmembrane segment spans residues 93 to 113 (SLVGISAAAAAYSLAQLLSIA). Topologically, residues 114–128 (HTALKKAPVVPSRRY) are cytoplasmic. The helical transmembrane segment at 129 to 149 (AWMLLAGDQVFAYAMLSAGSA) threads the bilayer. Residues 150–183 (AAAVANLNRTGVRHTALPNFCKPLPRFCDLSAAS) are Extracellular-facing. An N-linked (GlcNAc...) asparagine glycan is attached at Asn157. Residues 184 to 204 (IACAFLGCAFLAASAVIDVIW) form a helical membrane-spanning segment. At 205-208 (LSRL) the chain is on the cytoplasmic side.

The protein belongs to the Casparian strip membrane proteins (CASP) family. As to quaternary structure, homodimer and heterodimers.

It is found in the cell membrane. The chain is CASP-like protein 3A1 from Hordeum vulgare subsp. vulgare (Domesticated barley).